Consider the following 260-residue polypeptide: tRNA (guanine-N(1)-)-methyltransferase (260 aa).

S-adenosyl-L-methionine contacts are provided by residues G117 and 137–142 (LGDFVL).

It belongs to the RNA methyltransferase TrmD family. As to quaternary structure, homodimer.

It localises to the cytoplasm. The catalysed reaction is guanosine(37) in tRNA + S-adenosyl-L-methionine = N(1)-methylguanosine(37) in tRNA + S-adenosyl-L-homocysteine + H(+). Its function is as follows. Specifically methylates guanosine-37 in various tRNAs. In Cupriavidus metallidurans (strain ATCC 43123 / DSM 2839 / NBRC 102507 / CH34) (Ralstonia metallidurans), this protein is tRNA (guanine-N(1)-)-methyltransferase.